Here is a 1344-residue protein sequence, read N- to C-terminus: MPAYFQRPENALKRANEFLEVGKKQPALDVLYDVMKSKKHRTWQKIHEPIMLKYLELCVDLRKSHLAKEGLYQYKNICQQVNIKSLEDVVRAYLKLAEEKTEAAKEESQQMVLDIEDLDNIQTPESVLLSAVSGEDTQDRTDRLLLTPWVKFLWESYRQCLDLLRNNSRVERLYHDIAQQAFKFCLQYTRKAEFRKLCDNLRMHLSQIQRHHNQSTAINLNNPESQSMHLETRLVQLDSAISMELWQEAFKAVEDIHGLFSLSKKPPKPQLMANYYNKVSTVFWKSGNALFHASTLHRLYHLSREMRKNLTQEEMQRMSTRVLLATLSIPITPERTDIARLLDMDGIIVEKQRRLATLLGLQAPPTRIGLINDMVRFSVLQYVVPEVKDLYNWLEVEFNPLKLCERVTKVLNWVREQPEKEPELQQYVPQLQNNTILRLLQQVAQIYQSIEFSRLTSLVPFVDAFQLERAIVDAARHCDLQVRIDHTSRTLSFGSDLNYATREDAPVGPHLQSMPSEQIRNQLTAMSSVLAKALEVIRPAHILQEKEEQHQLAVNAYLKNSRKEHQRILARRQTIEERKERLESLNIQREKEELEQREAELQKVRKAEEERLRQEAKEREKERILQEHEQIKKKTVRERLEQIKKTELGAKAFKDIDIEDLEELDPDFIMAKQVEQLEKEKKELQERLKNQEKKIDYFERAKRLEEIPLIKSAYEEQRVKDMDLWEQQEEERITTMQLEREKALEHKNRMSRMLEDRDLFVMRLKAARQSVYEEKLKQFEERLAEERHSRLEDRKRQRKEERKITYYREKEEEEQRRAEEQMLKEREERERAERAKREEELREYQERVKKLEEVERKKRQRELEIEERERRREEERRLGDDPLSRKDSRWGDRDSEGTWRKGPEADSEWRRGPPEKEWRRETRDDERPHRRDEDRLRRLGGDDEERESSLRPDDDRIPRRGLDDDRGPRRGPDEDRFSRRGTDDDRPSWRNADDDRPPRRIGDDDRGSWRHTDDDRPPRRGLDDERGSWRTADEDRGPRRGMDDDRGPRRGGADDERSSWRNADDDRGPRRGMDDDRGPRRGLDDDRGPWRNAAEDRISRRGADDDRGPWRNMDDDRVPRRGDDARPGPWRPFVKPGGWREKEKAREESWGPPRESRPSEEREWDRDKEKDRDNQDREENDKDLERDRDRERDGDREDRFRRPRDEGGWRRGPAEESSSWRDSSRRDDRDREDRRRDRDDRRDLRDLRDRRDLRDDRDRRGPPLRSEREEASSWRRTDDRKDDRTEERDPPRRVPPPALSRDREREREREGEKEKASWRAEKDRESLRRTKNETDEDGWTTVRR.

K68 bears the N6-acetyllysine mark. Positions 82–120 (NIKSLEDVVRAYLKLAEEKTEAAKEESQQMVLDIEDLDN) form a coiled coil. Positions 315 to 498 (MQRMSTRVLL…RTLSFGSDLN (184 aa)) constitute a PCI domain. 2 positions are modified to phosphoserine: S492 and S584. The tract at residues 664 to 835 (LDPDFIMAKQ…REERERAERA (172 aa)) is interaction with EIF3B. Disordered stretches follow at residues 807-844 (YREK…LREY), 866-1240 (EERE…DRDD), and 1252-1344 (DLRD…TVRR). Basic and acidic residues-rich tracts occupy residues 866–1126 (EERE…DDAR), 1138–1240 (GWRE…DRDD), 1252–1292 (DLRD…DPPR), and 1300–1333 (SRDR…TKNE). At S895 the chain carries Phosphoserine. One copy of the 1; truncated repeat lies at 924-931 (DDERPHRR). A 21 X 10 AA approximate tandem repeats of [DA]-[DE]-[ED]-R-[PLIGFSV]-[RPS]-[RW]-[RL]-[GNIHT]-[DGLPTAM] region spans residues 924–1133 (DDERPHRRDE…DARPGPWRPF (210 aa)). Residues 932-941 (DEDRLRRLGG) form repeat 2. The 3; approximate repeat unit spans residues 942–951 (DDEERESSLR). At S949 the chain carries Phosphoserine. 17 tandem repeats follow at residues 953-962 (DDDRIPRRGL), 963-972 (DDDRGPRRGP), 973-982 (DEDRFSRRGT), 983-992 (DDDRPSWRNA), 993-1002 (DDDRPPRRIG), 1003-1012 (DDDRGSWRHT), 1013-1022 (DDDRPPRRGL), 1023-1032 (DDERGSWRTA), 1033-1042 (DEDRGPRRGM), 1043-1052 (DDDRGPRRGG), 1054-1063 (DDERSSWRNA), 1064-1073 (DDDRGPRRGM), 1074-1083 (DDDRGPRRGL), 1084-1093 (DDDRGPWRNA), 1094-1103 (AEDRISRRGA), 1104-1113 (DDDRGPWRNM), and 1114-1123 (DDDRVPRRGD). S1028 is modified (phosphoserine). One copy of the 21; approximate repeat lies at 1124–1133 (DARPGPWRPF). Phosphoserine is present on residues S1149, S1159, and S1223. Phosphoserine is present on residues S1300 and S1326.

Belongs to the eIF-3 subunit A family. Interacts with KRT7. Component of the eukaryotic translation initiation factor 3 (eIF-3) complex, which is composed of 13 subunits: EIF3A, EIF3B, EIF3C, EIF3D, EIF3E, EIF3F, EIF3G, EIF3H, EIF3I, EIF3J, EIF3K, EIF3L and EIF3M. The eIF-3 complex appears to include 3 stable modules: module A is composed of EIF3A, EIF3B, EIF3G and EIF3I; module B is composed of EIF3F, EIF3H, and EIF3M; and module C is composed of EIF3C, EIF3D, EIF3E, EIF3L and EIF3K. EIF3C of module C binds EIF3B of module A and EIF3H of module B, thereby linking the three modules. EIF3J is a labile subunit that binds to the eIF-3 complex via EIF3B. The eIF-3 complex may interact with RPS6KB1 under conditions of nutrient depletion. Mitogenic stimulation may lead to binding and activation of a complex composed of MTOR and RPTOR, leading to phosphorylation and release of RPS6KB1 and binding of EIF4B to eIF-3. Interacts with EIF4G1 and PIWIL2. In terms of processing, phosphorylated. Phosphorylation is enhanced upon serum stimulation.

The protein localises to the cytoplasm. It is found in the cytoskeleton. It localises to the microtubule organizing center. The protein resides in the centrosome. Its subcellular location is the nucleus. Its function is as follows. RNA-binding component of the eukaryotic translation initiation factor 3 (eIF-3) complex, which is required for several steps in the initiation of protein synthesis. The eIF-3 complex associates with the 40S ribosome and facilitates the recruitment of eIF-1, eIF-1A, eIF-2:GTP:methionyl-tRNAi and eIF-5 to form the 43S pre-initiation complex (43S PIC). The eIF-3 complex stimulates mRNA recruitment to the 43S PIC and scanning of the mRNA for AUG recognition. The eIF-3 complex is also required for disassembly and recycling of post-termination ribosomal complexes and subsequently prevents premature joining of the 40S and 60S ribosomal subunits prior to initiation. The eIF-3 complex specifically targets and initiates translation of a subset of mRNAs involved in cell proliferation, including cell cycling, differentiation and apoptosis, and uses different modes of RNA stem-loop binding to exert either translational activation or repression. The polypeptide is Eukaryotic translation initiation factor 3 subunit A (Eif3a) (Mus musculus (Mouse)).